A 498-amino-acid chain; its full sequence is MLSSSSLYAAIDLGSNSFHMLVTRETAGSIQTLAKIKRKVRLAAGLDKQNRLSQEAMQRGWQCLQLFSERLQDIPQDQVRVVATATLRLATNADEFLQRAQEILGLPIQVISGEEEARLIYQGVAHTTGGPDARLVVDIGGGSTELATGIGAKTTQLISLPMGCVTWLDRYFSDRNLEAGNFERAENAAREMLRPVAASLREQGWQICVGASGTVQALQEIMVAQGMDEYITLPKLRQLKEHAIQCDKLEELEIDGLTLERALVFPSGLAILLAIFQELDIKTMTLAGGALREGLVYGMLHLPVDQDIRHRTLATLQRRYLLDTEQAKRVSTLADNFLQQVARDWQLDSRCRELLRSACMVHEIGLSIDFRQSPQHAAYLIRHSDLPGFTPAQKKLLATLLQNQINPIDLMPLSQQNALPVNQAQHLCRLLRLAIIFASRRRDDTLPAVRLRVEGEALRLILPAGWLAQHPLRAEMLEQESRWQSYVHWPLMLEEAPA.

The protein belongs to the GppA/Ppx family. GppA subfamily.

It carries out the reaction guanosine 3'-diphosphate 5'-triphosphate + H2O = guanosine 3',5'-bis(diphosphate) + phosphate + H(+). It functions in the pathway purine metabolism; ppGpp biosynthesis; ppGpp from GTP: step 2/2. Catalyzes the conversion of pppGpp to ppGpp. Guanosine pentaphosphate (pppGpp) is a cytoplasmic signaling molecule which together with ppGpp controls the 'stringent response', an adaptive process that allows bacteria to respond to amino acid starvation, resulting in the coordinated regulation of numerous cellular activities. In Pectobacterium atrosepticum (strain SCRI 1043 / ATCC BAA-672) (Erwinia carotovora subsp. atroseptica), this protein is Guanosine-5'-triphosphate,3'-diphosphate pyrophosphatase.